The primary structure comprises 2472 residues: Centrosomal protein of 290 kDa (2472 aa).

A self-association (with itself or C-terminus) region spans residues 1–689 (MPPNIKWKEL…MESKNAEGIF (689 aa)). 3 coiled-coil regions span residues 59 to 747 (MKMK…LRQS), 1129 to 1392 (RQRI…QQSK), and 1459 to 1492 (QVIL…ILSR). Residues 128–164 (DRELEDMEKELDKEKKVNEQLALRNEEAENENSKLRR) form a disordered region. Positions 137–164 (ELDKEKKVNEQLALRNEEAENENSKLRR) are enriched in basic and acidic residues. The interaction with IQCB1 stretch occupies residues 690–890 (DASLHLKAQV…TVLQVNEKSL (201 aa)). Disordered stretches follow at residues 1691–1713 (AHKD…SRAP) and 2451–2472 (PSPL…FPIY). Over residues 1697–1713 (SLKSELQAQKEANSRAP) the composition is skewed to polar residues. The tract at residues 1960–2472 (TTGMTVDQVL…GESPHSFPIY (513 aa)) is self-association (with itself or N-terminus).

As to quaternary structure, part of the tectonic-like complex (also named B9 complex). Interacts with ATF4 via its N-terminal region. Associates with the BBSome complex, interacting (via N-terminus) with BBS4. Interacts with IQCB1/NPHP5; IQCB1 and CEP290/NPHP6 are proposed to form a functional NPHP5-6 module localized to the centrosome. Interacts with NPHP4; the interaction likely requires additional interactors. Interacts with ZNF423, FAM161A, CEP162, CEP162, CEP131, TALPID3, CCDC13, CC2D2A, RPGRIP1. Can self-associate (homo- or heteromeric). Interacts with CCP110; required for suppressing cilia formation. Interacts with RPGR. Associates (via C-terminus) with microtubules; association to microtubule is reduced in response to cellular stress, such as ultraviolet light (UV) radiation or heat shock, in a process that requires p38 MAP kinase signaling. Interacts with FAM161A. Interacts with PCM1. Interacts with CCDC66. Interacts with ARMC9 and CSPP1. Post-translationally, ubiquitinated. May undergo monoubiquitination; monoubiquitination is inhibited in response to cellular stress, such as ultraviolet light (UV) radiation or heat shock, but does not cause its displacement from centriolar satellites. Expressed in multiple organs during early postnatal development, with highest levels in hindbrain.

The protein resides in the cytoplasm. It is found in the cytoskeleton. Its subcellular location is the microtubule organizing center. It localises to the centrosome. The protein localises to the centriolar satellite. The protein resides in the nucleus. It is found in the centriole. Its subcellular location is the cell projection. It localises to the cilium. The protein localises to the cilium basal body. The protein resides in the cytoplasmic vesicle. In terms of biological role, involved in early and late steps in cilia formation. Its association with CCP110 is required for inhibition of primary cilia formation by CCP110. May play a role in early ciliogenesis in the disappearance of centriolar satellites and in the transition of primary ciliar vesicles (PCVs) to capped ciliary vesicles (CCVs). Required for the centrosomal recruitment of RAB8A and for the targeting of centriole satellite proteins to centrosomes such as of PCM1. Required for the correct localization of ciliary and phototransduction proteins in retinal photoreceptor cells; may play a role in ciliary transport processes. Required for efficient recruitment of RAB8A to primary cilium. In the ciliary transition zone is part of the tectonic-like complex (also named B9 complex) which is required for tissue-specific ciliogenesis and may regulate ciliary membrane composition. Involved in regulation of the BBSome complex integrity, specifically for presence of BBS2, BBS5 and BBS8/TTC8 in the complex, and in ciliary targeting of selected BBSome cargos. May play a role in controlling entry of the BBSome complex to cilia possibly implicating IQCB1/NPHP5. Activates ATF4-mediated transcription. This is Centrosomal protein of 290 kDa from Mus musculus (Mouse).